Here is a 194-residue protein sequence, read N- to C-terminus: RNA polymerase II subunit A C-terminal domain phosphatase SSU72 like protein 4 (194 aa).

It belongs to the SSU72 phosphatase family.

It localises to the nucleus. The enzyme catalyses O-phospho-L-seryl-[protein] + H2O = L-seryl-[protein] + phosphate. The catalysed reaction is O-phospho-L-threonyl-[protein] + H2O = L-threonyl-[protein] + phosphate. In terms of biological role, protein phosphatase that catalyzes the dephosphorylation of the C-terminal domain of RNA polymerase II. Plays a role in RNA processing and termination. The sequence is that of RNA polymerase II subunit A C-terminal domain phosphatase SSU72 like protein 4 from Homo sapiens (Human).